A 203-amino-acid polypeptide reads, in one-letter code: Snake venom metalloproteinase atroxase (203 aa).

Position 1 is a pyrrolidone carboxylic acid (Glu) (Glu1). Asn5 carries N-linked (GlcNAc...) asparagine glycosylation. One can recognise a Peptidase M12B domain in the interval 9-203 (RYIELVVVAD…KQYNPQIXNK (195 aa)). 2 residues coordinate Ca(2+): Glu12 and Asp96. His145 is a Zn(2+) binding site. The active site involves Glu146. Residues His149 and His155 each contribute to the Zn(2+) site. A disulfide bond links Cys160 and Cys167. Asn202 is a binding site for Ca(2+).

Belongs to the venom metalloproteinase (M12B) family. P-I subfamily. In terms of assembly, monomer. Requires Zn(2+) as cofactor. The N-terminus is blocked. As to expression, expressed by the venom gland.

It is found in the secreted. The catalysed reaction is Cleavage of 5-His-|-Leu-6, 9-Ser-|-His-10, 10-His-|-Leu-11, 14-Ala-|-Leu-15 and 16-Tyr-|-Leu-17 in insulin B chain.. Its activity is regulated as follows. Inhibited by EDTA and alpha2-macroglobulin. In terms of biological role, snake venom zinc metalloprotease that has Aalpha, Bbeta fibrin(ogen)olytic activities. It cleaves the Aalpha chain of fibrinogen first followed by the Bbeta chain and shows no effect on the gamma chain. Does not induce or inhibit platelet aggregation, and is unable to activate plasminogen. Exhibits low lethality when tested on mice. Intravenous administration results in thrombolysis within one hour followed by recanalization. Fibrinogenolytic activity results in a 60% decrease in the rat's plasma fibrinogen level. Histological examination of kidney, liver, heart and lung tissue shows no necrosis nor hemorrhage. In Crotalus atrox (Western diamondback rattlesnake), this protein is Snake venom metalloproteinase atroxase.